Here is a 424-residue protein sequence, read N- to C-terminus: Arginine ADP-riboxanase OspC4 (424 aa).

NAD(+) contacts are provided by His85, Gln86, Ser87, Leu91, Ile104, Asn114, Phe130, His148, Phe153, Asp173, and Glu268. Glu268 is an active-site residue. ANK repeat units follow at residues 311 to 340 (MAHQ…FTKQ), 355 to 386 (NLYD…DVNK), and 393 to 422 (SGDT…GIRQ).

It belongs to the OspC family.

It localises to the secreted. It is found in the host cytoplasm. The enzyme catalyses L-arginyl-[protein] + NAD(+) = ADP-riboxanated L-argininyl-[protein] + nicotinamide + NH4(+) + H(+). Its function is as follows. ADP-riboxanase effector that mediates arginine ADP-riboxanation of host caspase CASP4/CASP11, thereby inhibiting pyroptosis. The chain is Arginine ADP-riboxanase OspC4 from Shigella flexneri.